The chain runs to 336 residues: Flagellar filament 41 kDa core protein (336 aa).

A disordered region spans residues 208–236 (AAPVQEGVQQEGAQQPAPATAPSQGGVNS). Over residues 210–233 (PVQEGVQQEGAQQPAPATAPSQGG) the composition is skewed to low complexity.

The protein belongs to the bacterial flagellin family. The flagellum consists of an outer layer composed of repeating units of FlaA around a core that contains several antigenically related polypeptides.

The protein resides in the periplasmic flagellum. It is found in the periplasm. Functionally, component of the core of the flagella. This is Flagellar filament 41 kDa core protein (fla) from Borreliella burgdorferi (strain ATCC 35210 / DSM 4680 / CIP 102532 / B31) (Borrelia burgdorferi).